Here is a 258-residue protein sequence, read N- to C-terminus: Imidazole glycerol phosphate synthase subunit HisF (258 aa).

Catalysis depends on residues D11 and D130.

Belongs to the HisA/HisF family. Heterodimer of HisH and HisF.

The protein resides in the cytoplasm. It carries out the reaction 5-[(5-phospho-1-deoxy-D-ribulos-1-ylimino)methylamino]-1-(5-phospho-beta-D-ribosyl)imidazole-4-carboxamide + L-glutamine = D-erythro-1-(imidazol-4-yl)glycerol 3-phosphate + 5-amino-1-(5-phospho-beta-D-ribosyl)imidazole-4-carboxamide + L-glutamate + H(+). It functions in the pathway amino-acid biosynthesis; L-histidine biosynthesis; L-histidine from 5-phospho-alpha-D-ribose 1-diphosphate: step 5/9. IGPS catalyzes the conversion of PRFAR and glutamine to IGP, AICAR and glutamate. The HisF subunit catalyzes the cyclization activity that produces IGP and AICAR from PRFAR using the ammonia provided by the HisH subunit. The sequence is that of Imidazole glycerol phosphate synthase subunit HisF from Escherichia coli O127:H6 (strain E2348/69 / EPEC).